Reading from the N-terminus, the 339-residue chain is Ketol-acid reductoisomerase (NADP(+)) (339 aa).

In terms of domain architecture, KARI N-terminal Rossmann spans 1-182 (MRVYYDRDAD…GGGRAGIIET (182 aa)). Residues 24–27 (YGSQ), Arg48, Ser51, Thr53, and 83–86 (DELQ) each bind NADP(+). His108 is an active-site residue. An NADP(+)-binding site is contributed by Gly134. One can recognise a KARI C-terminal knotted domain in the interval 183 to 328 (TFKEECETDL…AELRAMMPWI (146 aa)). Asp191, Glu195, Glu227, and Glu231 together coordinate Mg(2+). Substrate is bound at residue Ser252.

Belongs to the ketol-acid reductoisomerase family. Mg(2+) is required as a cofactor.

The enzyme catalyses (2R)-2,3-dihydroxy-3-methylbutanoate + NADP(+) = (2S)-2-acetolactate + NADPH + H(+). It carries out the reaction (2R,3R)-2,3-dihydroxy-3-methylpentanoate + NADP(+) = (S)-2-ethyl-2-hydroxy-3-oxobutanoate + NADPH + H(+). It participates in amino-acid biosynthesis; L-isoleucine biosynthesis; L-isoleucine from 2-oxobutanoate: step 2/4. Its pathway is amino-acid biosynthesis; L-valine biosynthesis; L-valine from pyruvate: step 2/4. Functionally, involved in the biosynthesis of branched-chain amino acids (BCAA). Catalyzes an alkyl-migration followed by a ketol-acid reduction of (S)-2-acetolactate (S2AL) to yield (R)-2,3-dihydroxy-isovalerate. In the isomerase reaction, S2AL is rearranged via a Mg-dependent methyl migration to produce 3-hydroxy-3-methyl-2-ketobutyrate (HMKB). In the reductase reaction, this 2-ketoacid undergoes a metal-dependent reduction by NADPH to yield (R)-2,3-dihydroxy-isovalerate. In Beijerinckia indica subsp. indica (strain ATCC 9039 / DSM 1715 / NCIMB 8712), this protein is Ketol-acid reductoisomerase (NADP(+)).